We begin with the raw amino-acid sequence, 249 residues long: tRNA (guanine-N(1)-)-methyltransferase (249 aa).

S-adenosyl-L-methionine-binding positions include glycine 121 and 141–146 (LGDFVL).

Belongs to the RNA methyltransferase TrmD family. In terms of assembly, homodimer.

The protein localises to the cytoplasm. The catalysed reaction is guanosine(37) in tRNA + S-adenosyl-L-methionine = N(1)-methylguanosine(37) in tRNA + S-adenosyl-L-homocysteine + H(+). In terms of biological role, specifically methylates guanosine-37 in various tRNAs. The chain is tRNA (guanine-N(1)-)-methyltransferase from Cereibacter sphaeroides (strain KD131 / KCTC 12085) (Rhodobacter sphaeroides).